The chain runs to 783 residues: DNA repair and recombination protein RAD54-like (783 aa).

The segment at R2–Q9 is required for chromatin remodeling, strand pairing activities and coupling of ATPase activity. T22 is modified (phosphothreonine). The Helicase ATP-binding domain maps to E165–E340. Position 178–185 (D178–T185) interacts with ATP. The short motif at D291–H294 is the DEGH box element. A Helicase C-terminal domain is found at L497–T654. The disordered stretch occupies residues A737 to F783. Over residues D765–A776 the composition is skewed to acidic residues.

It belongs to the SNF2/RAD54 helicase family. In terms of assembly, interacts (via N-terminus) with spn-A/Rad51.

The protein localises to the nucleus. Its function is as follows. Involved in mitotic DNA repair and meiotic recombination. Functions in the recombinational DNA repair pathway. Essential for interhomolog gene conversion (GC), but may have a less important role in intersister GC than spn-A/Rad51. In the presence of DNA, spn-A/Rad51 enhances the ATPase activity of okr/Rad54. This Drosophila mojavensis (Fruit fly) protein is DNA repair and recombination protein RAD54-like.